The chain runs to 1265 residues: Kinesin-related protein 13 (1265 aa).

One can recognise a Kinesin motor domain in the interval 23 to 350 (NIQAFVRVRP…LEYALKAKNI (328 aa)). 106 to 113 (GQTGTGKT) contributes to the ATP binding site. Residues 331 to 459 (LVNLEETINT…KQQQEKQKFI (129 aa)) are a coiled coil. 5 disordered regions span residues 918-1026 (KSGE…QPLI), 1085-1119 (SLVNESPFSSPKLSKQKILQDQIQPPQPPSILSQL), 1127-1146 (LQPQQPQQQPPSFFNNLNGS), 1158-1214 (LLDD…NQSL), and 1245-1265 (FGGGSTISSKLKSLKQQTPLK). A compositionally biased stretch (low complexity) spans 930–951 (IPSPISTSSSSSSSSSISSIHS). 3 stretches are compositionally biased toward polar residues: residues 960-980 (HQSINNSIKSNNFDGSKSINC), 1003-1026 (LNLNSTPKSVSKNLKSSQQQQPLI), and 1085-1097 (SLVNESPFSSPKL). Low complexity-rich tracts occupy residues 1100-1119 (QKILQDQIQPPQPPSILSQL) and 1128-1146 (QPQQPQQQPPSFFNNLNGS). Over residues 1158-1169 (LLDDDSDSDNSD) the composition is skewed to acidic residues. Residues 1174–1195 (SLLSSNKKSSRASKNAVVSKKV) are compositionally biased toward low complexity. Residues 1250–1265 (TISSKLKSLKQQTPLK) show a composition bias toward polar residues.

Belongs to the TRAFAC class myosin-kinesin ATPase superfamily. Kinesin family. BimC subfamily.

It is found in the cytoplasm. Its subcellular location is the cytoskeleton. In terms of biological role, microtubule-associated force-producing protein that plays a role in organelle transport. Its motor activity is directed toward the microtubule's plus end. Cooperates with dynein to control the spindle elongation rate, but is dispensable for mitosis. The protein is Kinesin-related protein 13 (kif13) of Dictyostelium discoideum (Social amoeba).